A 640-amino-acid chain; its full sequence is ESX-3 secretion system protein EccA3 (640 aa).

ATP is bound at residue 393–400; that stretch reads GPPGTGKT.

This sequence belongs to the CbxX/CfxQ family. Part of the ESX-3 / type VII secretion system (T7SS), which is composed of cytosolic and membrane components.

The protein localises to the cytoplasm. Its function is as follows. Part of an ESX-3 / type VII specialized secretion system (T7SS), which exports several proteins. EccA3 exhibits ATPase activity and may provide energy for the export of ESX-3 substrates. The chain is ESX-3 secretion system protein EccA3 from Mycobacterium leprae (strain TN).